The chain runs to 522 residues: BTB/POZ domain-containing protein 16 (522 aa).

The region spanning 166 to 222 (INDPAVTRVAFALALKNLYMKEVEMTVDNVLGVLASAHILQFNRLFQKCVNMMMNRL) is the BTB domain.

The chain is BTB/POZ domain-containing protein 16 (Btbd16) from Mus musculus (Mouse).